A 407-amino-acid chain; its full sequence is Aurora kinase (407 aa).

Disordered regions lie at residues 1 to 43 (MTPT…STSS) and 66 to 137 (ERQG…TQSK). Low complexity-rich tracts occupy residues 31–43 (SAST…STSS) and 126–136 (STTTTMTSTQS). In terms of domain architecture, Protein kinase spans 147-399 (FDIGRPLGKG…LEGVIAHAWI (253 aa)). ATP contacts are provided by residues Lys157, Lys176, and 224–227 (LEYA). Residue Asp272 is the Proton acceptor of the active site. Residue Asp290 participates in ATP binding.

It belongs to the protein kinase superfamily. Ser/Thr protein kinase family.

Its subcellular location is the cytoplasm. It is found in the cytoskeleton. The protein resides in the spindle. The protein localises to the midbody. It localises to the microtubule organizing center. Its subcellular location is the centrosome. It is found in the nucleus. The protein resides in the chromosome. The protein localises to the centromere. It catalyses the reaction L-seryl-[protein] + ATP = O-phospho-L-seryl-[protein] + ADP + H(+). It carries out the reaction L-threonyl-[protein] + ATP = O-phospho-L-threonyl-[protein] + ADP + H(+). Its activity is regulated as follows. Cdc2 activity is required for activation. Functionally, serine/threonine protein kinase that contributes to the regulation of cell cycle progression. Involved in meiotic apparatus formation and polar body extrusion. Contributes to Plk1 activation and phosphorylation of histone H3 at 'Ser-10' during meiosis I. Required for accurate progression of early embryonic M phase. Involved in chromosome alignment and cleavage furrow formation during early embryonic cycles. May be involved in mitotic spindle formation and cytokinesis. This Patiria pectinifera (Starfish) protein is Aurora kinase.